The sequence spans 157 residues: Selenoprotein F (157 aa).

Residues 1-19 (MSGEVYILWLLSLIQTLSA) form the signal peptide. Position 84 (U84) is a non-standard amino acid, selenocysteine.

The protein belongs to the selenoprotein M/F family. As to expression, expressed in the brain, liver and retina. Localized to the retinal ganglion cell layer, the inner nuclear layer and the outer nuclear layer at both parr and smolt stages.

It localises to the endoplasmic reticulum lumen. Its function is as follows. May be involved in redox reactions associated with the formation of disulfide bonds. May contribute to the quality control of protein folding in the endoplasmic reticulum. May be involved in retinal development. This is Selenoprotein F from Oncorhynchus mykiss (Rainbow trout).